The chain runs to 228 residues: L-ribulose-5-phosphate 4-epimerase UlaF (228 aa).

Residues 26 to 27 (GN), 43 to 44 (SG), and 72 to 73 (SS) each bind substrate. D74, H93, and H95 together coordinate Zn(2+). Residue D118 is the Proton donor/acceptor of the active site. Position 167 (H167) interacts with Zn(2+). The active-site Proton donor/acceptor is the Y225.

It belongs to the aldolase class II family. AraD/FucA subfamily. Zn(2+) is required as a cofactor.

The catalysed reaction is L-ribulose 5-phosphate = D-xylulose 5-phosphate. It functions in the pathway cofactor degradation; L-ascorbate degradation; D-xylulose 5-phosphate from L-ascorbate: step 4/4. Its function is as follows. Catalyzes the isomerization of L-ribulose 5-phosphate to D-xylulose 5-phosphate. Is involved in the anaerobic L-ascorbate utilization. This is L-ribulose-5-phosphate 4-epimerase UlaF from Escherichia coli O6:K15:H31 (strain 536 / UPEC).